Here is a 340-residue protein sequence, read N- to C-terminus: tRNA N6-adenosine threonylcarbamoyltransferase (340 aa).

Residues His-114 and His-118 each contribute to the Fe cation site. Residues 140–144 (TISGG), Asp-173, Gly-186, Asp-190, and Asn-281 contribute to the substrate site. Asp-309 lines the Fe cation pocket.

The protein belongs to the KAE1 / TsaD family. The cofactor is Fe(2+).

It is found in the cytoplasm. It catalyses the reaction L-threonylcarbamoyladenylate + adenosine(37) in tRNA = N(6)-L-threonylcarbamoyladenosine(37) in tRNA + AMP + H(+). Required for the formation of a threonylcarbamoyl group on adenosine at position 37 (t(6)A37) in tRNAs that read codons beginning with adenine. Is involved in the transfer of the threonylcarbamoyl moiety of threonylcarbamoyl-AMP (TC-AMP) to the N6 group of A37, together with TsaE and TsaB. TsaD likely plays a direct catalytic role in this reaction. This chain is tRNA N6-adenosine threonylcarbamoyltransferase, found in Christiangramia forsetii (strain DSM 17595 / CGMCC 1.15422 / KT0803) (Gramella forsetii).